The following is a 609-amino-acid chain: Dihydroxy-acid dehydratase (609 aa).

Aspartate 81 contacts Mg(2+). Cysteine 122 contributes to the [2Fe-2S] cluster binding site. The Mg(2+) site is built by aspartate 123 and lysine 124. Lysine 124 is modified (N6-carboxylysine). Cysteine 195 contributes to the [2Fe-2S] cluster binding site. Mg(2+) is bound at residue glutamate 491. Serine 517 functions as the Proton acceptor in the catalytic mechanism.

It belongs to the IlvD/Edd family. Homodimer. Requires [2Fe-2S] cluster as cofactor. It depends on Mg(2+) as a cofactor.

The catalysed reaction is (2R)-2,3-dihydroxy-3-methylbutanoate = 3-methyl-2-oxobutanoate + H2O. It catalyses the reaction (2R,3R)-2,3-dihydroxy-3-methylpentanoate = (S)-3-methyl-2-oxopentanoate + H2O. The protein operates within amino-acid biosynthesis; L-isoleucine biosynthesis; L-isoleucine from 2-oxobutanoate: step 3/4. Its pathway is amino-acid biosynthesis; L-valine biosynthesis; L-valine from pyruvate: step 3/4. Its function is as follows. Functions in the biosynthesis of branched-chain amino acids. Catalyzes the dehydration of (2R,3R)-2,3-dihydroxy-3-methylpentanoate (2,3-dihydroxy-3-methylvalerate) into 2-oxo-3-methylpentanoate (2-oxo-3-methylvalerate) and of (2R)-2,3-dihydroxy-3-methylbutanoate (2,3-dihydroxyisovalerate) into 2-oxo-3-methylbutanoate (2-oxoisovalerate), the penultimate precursor to L-isoleucine and L-valine, respectively. The polypeptide is Dihydroxy-acid dehydratase (Acinetobacter baumannii (strain AB307-0294)).